We begin with the raw amino-acid sequence, 508 residues long: Probable glycine dehydrogenase (decarboxylating) subunit 2 (508 aa).

An N6-(pyridoxal phosphate)lysine modification is found at Lys277.

It belongs to the GcvP family. C-terminal subunit subfamily. The glycine cleavage system is composed of four proteins: P, T, L and H. In this organism, the P 'protein' is a heterodimer of two subunits. The cofactor is pyridoxal 5'-phosphate.

It carries out the reaction N(6)-[(R)-lipoyl]-L-lysyl-[glycine-cleavage complex H protein] + glycine + H(+) = N(6)-[(R)-S(8)-aminomethyldihydrolipoyl]-L-lysyl-[glycine-cleavage complex H protein] + CO2. Its function is as follows. The glycine cleavage system catalyzes the degradation of glycine. The P protein binds the alpha-amino group of glycine through its pyridoxal phosphate cofactor; CO(2) is released and the remaining methylamine moiety is then transferred to the lipoamide cofactor of the H protein. The chain is Probable glycine dehydrogenase (decarboxylating) subunit 2 from Saccharolobus solfataricus (strain ATCC 35092 / DSM 1617 / JCM 11322 / P2) (Sulfolobus solfataricus).